A 334-amino-acid polypeptide reads, in one-letter code: tRNA uridine(34) hydroxylase (334 aa).

A Rhodanese domain is found at 123 to 217 (SDPDVILVDT…YLEEVKQEES (95 aa)). Catalysis depends on C177, which acts as the Cysteine persulfide intermediate.

The protein belongs to the TrhO family.

The catalysed reaction is uridine(34) in tRNA + AH2 + O2 = 5-hydroxyuridine(34) in tRNA + A + H2O. In terms of biological role, catalyzes oxygen-dependent 5-hydroxyuridine (ho5U) modification at position 34 in tRNAs. In Shewanella putrefaciens (strain CN-32 / ATCC BAA-453), this protein is tRNA uridine(34) hydroxylase.